A 274-amino-acid polypeptide reads, in one-letter code: Formamidopyrimidine-DNA glycosylase (274 aa).

The active-site Schiff-base intermediate with DNA is proline 2. Glutamate 3 serves as the catalytic Proton donor. Lysine 58 functions as the Proton donor; for beta-elimination activity in the catalytic mechanism. 2 residues coordinate DNA: histidine 91 and arginine 110. The FPG-type zinc finger occupies 238-272; sequence QVYDKTGQECVRCGTIIEKIQLGGRGTHFCPNCQR. Arginine 262 acts as the Proton donor; for delta-elimination activity in catalysis.

It belongs to the FPG family. In terms of assembly, monomer. Zn(2+) is required as a cofactor.

The catalysed reaction is Hydrolysis of DNA containing ring-opened 7-methylguanine residues, releasing 2,6-diamino-4-hydroxy-5-(N-methyl)formamidopyrimidine.. It catalyses the reaction 2'-deoxyribonucleotide-(2'-deoxyribose 5'-phosphate)-2'-deoxyribonucleotide-DNA = a 3'-end 2'-deoxyribonucleotide-(2,3-dehydro-2,3-deoxyribose 5'-phosphate)-DNA + a 5'-end 5'-phospho-2'-deoxyribonucleoside-DNA + H(+). In terms of biological role, involved in base excision repair of DNA damaged by oxidation or by mutagenic agents. Acts as a DNA glycosylase that recognizes and removes damaged bases. Has a preference for oxidized purines, such as 7,8-dihydro-8-oxoguanine (8-oxoG). Has AP (apurinic/apyrimidinic) lyase activity and introduces nicks in the DNA strand. Cleaves the DNA backbone by beta-delta elimination to generate a single-strand break at the site of the removed base with both 3'- and 5'-phosphates. The sequence is that of Formamidopyrimidine-DNA glycosylase from Streptococcus pneumoniae serotype 4 (strain ATCC BAA-334 / TIGR4).